Consider the following 327-residue polypeptide: Glycerol-3-phosphate dehydrogenase [NAD(P)+] (327 aa).

The NADPH site is built by tryptophan 13, histidine 33, and lysine 102. 3 residues coordinate sn-glycerol 3-phosphate: lysine 102, glycine 130, and serine 132. Alanine 134 contributes to the NADPH binding site. Positions 185, 238, 248, 249, and 250 each coordinate sn-glycerol 3-phosphate. The Proton acceptor role is filled by lysine 185. Arginine 249 contacts NADPH. Glutamate 275 provides a ligand contact to NADPH.

It belongs to the NAD-dependent glycerol-3-phosphate dehydrogenase family.

It localises to the cytoplasm. The enzyme catalyses sn-glycerol 3-phosphate + NAD(+) = dihydroxyacetone phosphate + NADH + H(+). It carries out the reaction sn-glycerol 3-phosphate + NADP(+) = dihydroxyacetone phosphate + NADPH + H(+). Its pathway is membrane lipid metabolism; glycerophospholipid metabolism. Its function is as follows. Catalyzes the reduction of the glycolytic intermediate dihydroxyacetone phosphate (DHAP) to sn-glycerol 3-phosphate (G3P), the key precursor for phospholipid synthesis. This is Glycerol-3-phosphate dehydrogenase [NAD(P)+] from Vesicomyosocius okutanii subsp. Calyptogena okutanii (strain HA).